The chain runs to 113 residues: MHELWLCKRIVEIIKQQATGNKCRKVKKIVLEIGQLVAVDKHALNFSFKVITQGTIAQNAELSIVEIPGEAICNSCQQIVPMKQYYDECLVCGNHSLTLTKGEELKVKSMVVE.

Position 2 (His2) interacts with Ni(2+). Cys73, Cys76, Cys89, and Cys92 together coordinate Zn(2+).

Belongs to the HypA/HybF family.

In terms of biological role, involved in the maturation of [NiFe] hydrogenases. Required for nickel insertion into the metal center of the hydrogenase. The polypeptide is Hydrogenase maturation factor HypA (Legionella pneumophila subsp. pneumophila (strain Philadelphia 1 / ATCC 33152 / DSM 7513)).